The primary structure comprises 247 residues: Ferredoxin:CoB-CoM heterodisulfide reductase subunit C (247 aa).

One can recognise a 4Fe-4S ferredoxin-type domain in the interval 32 to 62 (TPESLGLDRCIQCGACTASCPAARFTDYSPR). The [4Fe-4S] cluster site is built by cysteine 41, cysteine 44, cysteine 47, cysteine 51, cysteine 84, cysteine 87, cysteine 90, and cysteine 94. Basic and acidic residues predominate over residues 216 to 240 (RTGTSCTEKKKNSGDLGFESDREYT). The interval 216–247 (RTGTSCTEKKKNSGDLGFESDREYTGQEALTV) is disordered.

Belongs to the HdrC family. As to quaternary structure, the ferredoxin:CoB-CoM heterodisulfide reductase is composed of three subunits; HdrA1, HdrB1 and HdrC1. [4Fe-4S] cluster is required as a cofactor.

It localises to the cytoplasm. It carries out the reaction coenzyme B + coenzyme M + 2 oxidized [2Fe-2S]-[ferredoxin] = coenzyme M-coenzyme B heterodisulfide + 2 reduced [2Fe-2S]-[ferredoxin] + 2 H(+). The protein operates within cofactor metabolism; coenzyme M-coenzyme B heterodisulfide reduction; coenzyme B and coenzyme M from coenzyme M-coenzyme B heterodisulfide: step 1/1. Part of a complex that catalyzes the reversible reduction of CoM-S-S-CoB to the thiol-coenzymes H-S-CoM (coenzyme M) and H-S-CoB (coenzyme B). Probably involved in methylotrophic methanogenesis but not in aceticlastic methanogenesis. This chain is Ferredoxin:CoB-CoM heterodisulfide reductase subunit C, found in Methanosarcina acetivorans (strain ATCC 35395 / DSM 2834 / JCM 12185 / C2A).